The sequence spans 218 residues: Superoxide dismutase [Mn], mitochondrial (218 aa).

Residues His27, His84, Asp174, and His178 each contribute to the Mn(2+) site.

Belongs to the iron/manganese superoxide dismutase family. As to quaternary structure, homotetramer. It depends on Mn(2+) as a cofactor.

The protein resides in the mitochondrion matrix. It carries out the reaction 2 superoxide + 2 H(+) = H2O2 + O2. Its function is as follows. Destroys superoxide anion radicals which are normally produced within the cells and which are toxic to biological systems. The protein is Superoxide dismutase [Mn], mitochondrial (SODA) of Chlamydomonas reinhardtii (Chlamydomonas smithii).